We begin with the raw amino-acid sequence, 437 residues long: Bifunctional protein GlmU (437 aa).

Residues 1–223 (MHNTAVILAA…WDECRGVNSR (223 aa)) form a pyrophosphorylase region. UDP-N-acetyl-alpha-D-glucosamine is bound by residues 8-11 (LAAG), K22, Q70, 75-76 (GT), 96-98 (YGD), G135, E149, N164, and N221. Residue D98 coordinates Mg(2+). Mg(2+) is bound at residue N221. Positions 224–244 (AELAAAEAAMQSRLRAAALAA) are linker. An N-acetyltransferase region spans residues 245-437 (GVTMTAPETV…AELRMTKGKR (193 aa)). UDP-N-acetyl-alpha-D-glucosamine contacts are provided by R310 and K328. Residue H340 is the Proton acceptor of the active site. UDP-N-acetyl-alpha-D-glucosamine-binding residues include Y343 and N354. Residues A357, 363 to 364 (NY), S382, A400, and R417 each bind acetyl-CoA.

It in the N-terminal section; belongs to the N-acetylglucosamine-1-phosphate uridyltransferase family. This sequence in the C-terminal section; belongs to the transferase hexapeptide repeat family. As to quaternary structure, homotrimer. It depends on Mg(2+) as a cofactor.

The protein localises to the cytoplasm. It catalyses the reaction alpha-D-glucosamine 1-phosphate + acetyl-CoA = N-acetyl-alpha-D-glucosamine 1-phosphate + CoA + H(+). The enzyme catalyses N-acetyl-alpha-D-glucosamine 1-phosphate + UTP + H(+) = UDP-N-acetyl-alpha-D-glucosamine + diphosphate. It participates in nucleotide-sugar biosynthesis; UDP-N-acetyl-alpha-D-glucosamine biosynthesis; N-acetyl-alpha-D-glucosamine 1-phosphate from alpha-D-glucosamine 6-phosphate (route II): step 2/2. It functions in the pathway nucleotide-sugar biosynthesis; UDP-N-acetyl-alpha-D-glucosamine biosynthesis; UDP-N-acetyl-alpha-D-glucosamine from N-acetyl-alpha-D-glucosamine 1-phosphate: step 1/1. Its pathway is bacterial outer membrane biogenesis; LPS lipid A biosynthesis. Functionally, catalyzes the last two sequential reactions in the de novo biosynthetic pathway for UDP-N-acetylglucosamine (UDP-GlcNAc). The C-terminal domain catalyzes the transfer of acetyl group from acetyl coenzyme A to glucosamine-1-phosphate (GlcN-1-P) to produce N-acetylglucosamine-1-phosphate (GlcNAc-1-P), which is converted into UDP-GlcNAc by the transfer of uridine 5-monophosphate (from uridine 5-triphosphate), a reaction catalyzed by the N-terminal domain. The polypeptide is Bifunctional protein GlmU (Acidiphilium cryptum (strain JF-5)).